We begin with the raw amino-acid sequence, 57 residues long: Mambaquaretin-2 (57 aa).

The region spanning Cys5–Cys55 is the BPTI/Kunitz inhibitor domain. 3 disulfides stabilise this stretch: Cys5-Cys55, Cys14-Cys38, and Cys30-Cys51.

Belongs to the venom Kunitz-type family. In terms of tissue distribution, expressed by the venom gland.

It is found in the secreted. Interacts with vasopressin V2 receptor (V2R/AVPR2), probably in a selective manner. Inhibits vasopressin binding human V2R in the nanomolar range (Ki=8.16 nM), and also moderately inhibits vasopressin-induced cAMP production (IC(50)=224 nM). In vivo, intraperitoneal injection of this protein into rats increases diuresis by 5.5-fold, without any loss of electrolytes. The chain is Mambaquaretin-2 from Dendroaspis viridis (Western green mamba).